A 506-amino-acid polypeptide reads, in one-letter code: Alpha-L-fucosidase 1 (506 aa).

Residues Met1–Ser23 form the signal peptide. N-linked (GlcNAc...) asparagine glycans are attached at residues Asn22, Asn82, Asn248, Asn320, Asn355, and Asn487.

It belongs to the glycosyl hydrolase 29 family.

It is found in the secreted. The protein resides in the extracellular space. Its subcellular location is the apoplast. The enzyme catalyses an alpha-L-fucoside + H2O = L-fucose + an alcohol. Hydrolyzes both 3- and 4-linked fucoses in Lewis determinants. Not active on neither 2-linked fucose nor on fucose in alpha-1,3-linkage to the innermost GlcNAc. This is Alpha-L-fucosidase 1 (FUC1) from Arabidopsis thaliana (Mouse-ear cress).